The sequence spans 444 residues: U4/U6 snRNA-associated-splicing factor PRP24 (444 aa).

The segment covering 1-16 (MEYGHHARPDSKRPLD) has biased composition (basic and acidic residues). A disordered region spans residues 1–29 (MEYGHHARPDSKRPLDEGSPAAAGLTSKK). A Phosphoserine modification is found at Ser-19. 3 consecutive RRM domains span residues 41 to 116 (TTVL…HLTE), 117 to 195 (CTLW…VSNP), and 210 to 289 (REIM…LADK).

As to quaternary structure, monomer. Interacts with U6 snRNA SNR6 and the LSM2-8 complex (small nuclear RNA); to chaperone formation of the U4/U6-U5 tri-snRNP (small nuclear ribonucleoprotein) assembly, the protein is displaced from the U4/U6 snRNP once pairing is complete.

It localises to the nucleus. In terms of biological role, functions as a recycling factor of the spliceosome, a machinery that forms on each precursor-messenger RNA (pre-mRNA) and catalyzes the removal of introns. Chaperones the re-annealing of U4 and U6 snRNAs (small nuclear RNAs) released from previous rounds of splicing, an initial step in reforming the U4/U6-U5 tri-snRNP (small nuclear ribonucleoprotein) that can reassemble into another spliceosome complex; this step involves binding U6 and facilitating the unwinding of the U6 internal stem loop, followed by base-pairing of U6 to U4. This chain is U4/U6 snRNA-associated-splicing factor PRP24 (PRP24), found in Saccharomyces cerevisiae (strain ATCC 204508 / S288c) (Baker's yeast).